The chain runs to 302 residues: Phosphoribosylaminoimidazole-succinocarboxamide synthase (302 aa).

It belongs to the SAICAR synthetase family.

It catalyses the reaction 5-amino-1-(5-phospho-D-ribosyl)imidazole-4-carboxylate + L-aspartate + ATP = (2S)-2-[5-amino-1-(5-phospho-beta-D-ribosyl)imidazole-4-carboxamido]succinate + ADP + phosphate + 2 H(+). It participates in purine metabolism; IMP biosynthesis via de novo pathway; 5-amino-1-(5-phospho-D-ribosyl)imidazole-4-carboxamide from 5-amino-1-(5-phospho-D-ribosyl)imidazole-4-carboxylate: step 1/2. This chain is Phosphoribosylaminoimidazole-succinocarboxamide synthase, found in Leptothrix cholodnii (strain ATCC 51168 / LMG 8142 / SP-6) (Leptothrix discophora (strain SP-6)).